The following is a 347-amino-acid chain: Heat-inducible transcription repressor HrcA (347 aa).

It belongs to the HrcA family.

In terms of biological role, negative regulator of class I heat shock genes (grpE-dnaK-dnaJ and groELS operons). Prevents heat-shock induction of these operons. This Desulforamulus reducens (strain ATCC BAA-1160 / DSM 100696 / MI-1) (Desulfotomaculum reducens) protein is Heat-inducible transcription repressor HrcA.